Consider the following 71-residue polypeptide: DNA-directed RNA polymerase subunit omega (71 aa).

This sequence belongs to the RNA polymerase subunit omega family. In terms of assembly, the RNAP catalytic core consists of 2 alpha, 1 beta, 1 beta' and 1 omega subunit. When a sigma factor is associated with the core the holoenzyme is formed, which can initiate transcription.

The enzyme catalyses RNA(n) + a ribonucleoside 5'-triphosphate = RNA(n+1) + diphosphate. Promotes RNA polymerase assembly. Latches the N- and C-terminal regions of the beta' subunit thereby facilitating its interaction with the beta and alpha subunits. The polypeptide is DNA-directed RNA polymerase subunit omega (Campylobacter curvus (strain 525.92)).